A 570-amino-acid polypeptide reads, in one-letter code: Multidrug and toxin extrusion protein 1 (570 aa).

Residue Met1 is modified to N-acetylmethionine. Over 1 to 37 the chain is Cytoplasmic; that stretch reads MEAPEEPAPVRGGPEATLEIHGSRFLRLSAFREELRA. Residues 38-58 form a helical membrane-spanning segment; it reads LLVLAGPAFLVQLMVFLISFI. Residues 59–72 lie on the Extracellular side of the membrane; the sequence is SSVFCGHLGKLELD. The helical transmembrane segment at 73–93 threads the bilayer; it reads AVTLAIAVINVTGVSVGFGLS. Residues 94–120 lie on the Cytoplasmic side of the membrane; it reads SACDTLISQTYGSQNLKHVGVILQRSA. The helical transmembrane segment at 121-141 threads the bilayer; the sequence is LILLLCCFPCWALFLNTQHIL. Over 142-152 the chain is Extracellular; sequence LLFRQDPDVSR. The chain crosses the membrane as a helical span at residues 153-173; sequence LTQTYVTIFIPALPATFLYML. Residues 174–176 lie on the Cytoplasmic side of the membrane; that stretch reads QVK. A helical membrane pass occupies residues 177 to 197; it reads YLLNQGIVLPQIVTGVAANLV. The Extracellular portion of the chain corresponds to 198-216; it reads NALANYLFLHQLHLGAIGS. The chain crosses the membrane as a helical span at residues 217-237; it reads ALANLISQYTLALLLFFYILG. Residues 238–251 lie on the Cytoplasmic side of the membrane; the sequence is KKLHQATWGGWSLE. Residues 252–272 traverse the membrane as a helical segment; it reads CLQDWASFLHLAVPSMLMLCM. At 273–295 the chain is on the extracellular side; sequence EWWAYEVGSFLSGILGMVELGAQ. A helical membrane pass occupies residues 296–316; sequence SIVYELAIIVYMVPAGFSVAA. At 317 to 336 the chain is on the cytoplasmic side; it reads SVRVGNALGAGDMEQARKSS. Residues 337–357 traverse the membrane as a helical segment; the sequence is TVSLLITVLFAVAFSVLLLSC. Residues 358 to 370 lie on the Extracellular side of the membrane; it reads KDHVGYIFTTDRD. A helical transmembrane segment spans residues 371–391; the sequence is IINLVAQVVPIYAVSHLFEAL. At 392-408 the chain is on the cytoplasmic side; the sequence is ACTSGGVLRGSGNQKVG. Residues 409–429 form a helical membrane-spanning segment; the sequence is AIVNTIGYYVVGLPIGIALMF. Over 430 to 437 the chain is Extracellular; it reads ATKLGVMG. The helical transmembrane segment at 438–458 threads the bilayer; sequence LWSGIIICTVFQAVCFLGFII. Residues 459–546 are Cytoplasmic-facing; sequence QLNWKKACQQ…LSRKQLVLRR (88 aa). The segment at 508 to 534 is disordered; that stretch reads DVGKTGETQSDQQMRQEEPLPEHPQDS. The segment covering 521–533 has biased composition (basic and acidic residues); it reads MRQEEPLPEHPQD. A helical transmembrane segment spans residues 547-567; that stretch reads GLLLLGVFLILLVGILVRFYV. Residues 568–570 lie on the Extracellular side of the membrane; it reads RIQ.

It belongs to the multi antimicrobial extrusion (MATE) (TC 2.A.66.1) family.

Its subcellular location is the cell membrane. It is found in the apical cell membrane. The catalysed reaction is thiamine(out) + H(+)(in) = thiamine(in) + H(+)(out). The enzyme catalyses estrone 3-sulfate(in) + H(+)(out) = estrone 3-sulfate(out) + H(+)(in). It catalyses the reaction creatinine(in) + H(+)(out) = creatinine(out) + H(+)(in). It carries out the reaction agmatine(in) + H(+)(out) = agmatine(out) + H(+)(in). Multidrug efflux pump that functions as a H(+)/organic cation antiporter. Plays a physiological role in the excretion of cationic compounds including endogenous metabolites, drugs, toxins through the kidney and liver, into urine and bile respectively. Mediates the efflux of endogenous compounds such as creatinine, vitamin B1/thiamine, agmatine and estrone-3-sulfate. May also contribute to regulate the transport of cationic compounds in testis across the blood-testis-barrier. This chain is Multidrug and toxin extrusion protein 1 (SLC47A1), found in Pongo abelii (Sumatran orangutan).